A 429-amino-acid chain; its full sequence is Phosphoribosylamine--glycine ligase (429 aa).

An ATP-grasp domain is found at 109–316; sequence KDFLARHNIP…LVELCQAAIA (208 aa). 135 to 196 serves as a coordination point for ATP; sequence VREKGAPIVV…EEFLDGEEAS (62 aa). Residues Glu-286 and Asn-288 each contribute to the Mg(2+) site.

This sequence belongs to the GARS family. Mg(2+) serves as cofactor. Requires Mn(2+) as cofactor.

The enzyme catalyses 5-phospho-beta-D-ribosylamine + glycine + ATP = N(1)-(5-phospho-beta-D-ribosyl)glycinamide + ADP + phosphate + H(+). It participates in purine metabolism; IMP biosynthesis via de novo pathway; N(1)-(5-phospho-D-ribosyl)glycinamide from 5-phospho-alpha-D-ribose 1-diphosphate: step 2/2. This chain is Phosphoribosylamine--glycine ligase, found in Vibrio cholerae serotype O1 (strain ATCC 39315 / El Tor Inaba N16961).